Reading from the N-terminus, the 511-residue chain is Lysine--tRNA ligase 2 (511 aa).

The span at 1 to 11 shows a compositional bias: polar residues; sequence MTMEINNTDPS. Residues 1–21 are disordered; sequence MTMEINNTDPSENMPLPDDVD. 2 residues coordinate Mg(2+): E421 and E428.

The protein belongs to the class-II aminoacyl-tRNA synthetase family. Homodimer. Mg(2+) serves as cofactor.

Its subcellular location is the cytoplasm. It carries out the reaction tRNA(Lys) + L-lysine + ATP = L-lysyl-tRNA(Lys) + AMP + diphosphate. This chain is Lysine--tRNA ligase 2, found in Methanosarcina acetivorans (strain ATCC 35395 / DSM 2834 / JCM 12185 / C2A).